The chain runs to 533 residues: Capsid protein VP1 (533 aa).

A disordered region spans residues 333 to 353 (TIDLQQNPVPQTSSSTTDSPQ).

The protein belongs to the microviridae F protein family.

The protein localises to the virion. It localises to the host cytoplasm. In terms of biological role, assembles to form an icosahedral capsid with a T=1 symmetry. The sequence is that of Capsid protein VP1 from Bdellovibrio bacteriovorus (Bacteriophage phiMH2K).